We begin with the raw amino-acid sequence, 23 residues long: uncharacterized protein (23 aa).

Its subcellular location is the plastid. The protein resides in the chloroplast. This is an uncharacterized protein from Zea mays (Maize).